Here is a 392-residue protein sequence, read N- to C-terminus: Galactokinase (392 aa).

Residue 37-40 participates in substrate binding; it reads EHTD. Residues serine 71 and 128 to 134 each bind ATP; that span reads GAGLSSS. Positions 134 and 166 each coordinate Mg(2+). The active-site Proton acceptor is aspartate 178. A substrate-binding site is contributed by tyrosine 228.

It belongs to the GHMP kinase family. GalK subfamily.

The protein localises to the cytoplasm. The catalysed reaction is alpha-D-galactose + ATP = alpha-D-galactose 1-phosphate + ADP + H(+). It functions in the pathway carbohydrate metabolism; galactose metabolism. Its function is as follows. Catalyzes the transfer of the gamma-phosphate of ATP to D-galactose to form alpha-D-galactose-1-phosphate (Gal-1-P). This Streptococcus pneumoniae serotype 4 (strain ATCC BAA-334 / TIGR4) protein is Galactokinase.